Reading from the N-terminus, the 311-residue chain is Ketoisovalerate oxidoreductase subunit VorB (311 aa).

Heterotetramer of one alpha, one beta, one delta and one gamma chain.

The catalysed reaction is 3-methyl-2-oxobutanoate + 2 oxidized [2Fe-2S]-[ferredoxin] + CoA = 2-methylpropanoyl-CoA + 2 reduced [2Fe-2S]-[ferredoxin] + CO2 + H(+). This Pyrococcus horikoshii (strain ATCC 700860 / DSM 12428 / JCM 9974 / NBRC 100139 / OT-3) protein is Ketoisovalerate oxidoreductase subunit VorB (vorB).